The chain runs to 159 residues: Phosphopantetheine adenylyltransferase (159 aa).

A substrate-binding site is contributed by serine 8. Residues 8 to 9 (SF) and histidine 16 contribute to the ATP site. Residues lysine 40, leucine 72, and arginine 86 each coordinate substrate. ATP contacts are provided by residues 87 to 89 (GLR), glutamate 97, and 122 to 128 (YSFISSS).

It belongs to the bacterial CoaD family. As to quaternary structure, homohexamer. Requires Mg(2+) as cofactor.

The protein localises to the cytoplasm. The enzyme catalyses (R)-4'-phosphopantetheine + ATP + H(+) = 3'-dephospho-CoA + diphosphate. It participates in cofactor biosynthesis; coenzyme A biosynthesis; CoA from (R)-pantothenate: step 4/5. Its function is as follows. Reversibly transfers an adenylyl group from ATP to 4'-phosphopantetheine, yielding dephospho-CoA (dPCoA) and pyrophosphate. This chain is Phosphopantetheine adenylyltransferase, found in Thermosipho melanesiensis (strain DSM 12029 / CIP 104789 / BI429).